Reading from the N-terminus, the 50-residue chain is Insulin 2 (50 aa).

Disulfide bonds link cysteine 8-cysteine 36, cysteine 20-cysteine 49, and cysteine 35-cysteine 40.

It belongs to the insulin family. In terms of assembly, heterodimer of a B chain and an A chain linked by two disulfide bonds.

It is found in the secreted. Functionally, insulin decreases blood glucose concentration. It increases cell permeability to monosaccharides, amino acids and fatty acids. It accelerates glycolysis, the pentose phosphate cycle, and glycogen synthesis in liver. This chain is Insulin 2 (ins2), found in Batrachoididae sp. (Toadfish).